The chain runs to 394 residues: Elongation factor Tu 1 (394 aa).

The tr-type G domain occupies 10–204 (KPHVNVGTIG…ALDTYIPEPE (195 aa)). The G1 stretch occupies residues 19-26 (GHVDHGKT). 19–26 (GHVDHGKT) contacts GTP. Threonine 26 is a binding site for Mg(2+). The interval 60 to 64 (GITIS) is G2. The interval 81–84 (DCPG) is G3. GTP contacts are provided by residues 81-85 (DCPGH) and 136-139 (NKCD). A G4 region spans residues 136–139 (NKCD). The G5 stretch occupies residues 174 to 176 (SAL).

The protein belongs to the TRAFAC class translation factor GTPase superfamily. Classic translation factor GTPase family. EF-Tu/EF-1A subfamily. In terms of assembly, monomer.

It localises to the cytoplasm. The enzyme catalyses GTP + H2O = GDP + phosphate + H(+). In terms of biological role, GTP hydrolase that promotes the GTP-dependent binding of aminoacyl-tRNA to the A-site of ribosomes during protein biosynthesis. The chain is Elongation factor Tu 1 from Vibrio vulnificus (strain CMCP6).